A 927-amino-acid polypeptide reads, in one-letter code: Sodium/calcium exchanger 3 (927 aa).

An N-terminal signal peptide occupies residues 1–30 (MAWLRLQPLTSAFLHFGLVTFVLFLNGLRA). At 31 to 73 (EAGGSGDVPSTGQNNESCSGSSDCKEGVILPIWYPENPSLGDK) the chain is on the extracellular side. Residue N45 is glycosylated (N-linked (GlcNAc...) asparagine). The chain crosses the membrane as a helical span at residues 74–94 (IARVIVYFVALIYMFLGVSII). Residues 95 to 147 (ADRFMASIEVITSQEREVTIKKPNGETSTTTIRVWNETVSNLTLMALGSSAPE) are Cytoplasmic-facing. Residues 140-180 (ALGSSAPEILLSLIEVCGHGFIAGDLGPSTIVGSAAFNMFI) form an Alpha-1 repeat. The chain crosses the membrane as a helical span at residues 148-168 (ILLSLIEVCGHGFIAGDLGPS). Position 169 (T169) is a topological domain, extracellular. The chain crosses the membrane as a helical span at residues 170–190 (IVGSAAFNMFIIIGICVYVIP). At 191–202 (DGETRKIKHLRV) the chain is on the cytoplasmic side. Residues 203-223 (FFITAAWSIFAYIWLYMILAV) traverse the membrane as a helical segment. Over 224 to 230 (FSPGVVQ) the chain is Extracellular. The chain crosses the membrane as a helical span at residues 231-251 (VWEGLLTLFFFPVCVLLAWVA). At 252 to 726 (DKRLLFYKYM…DESGEERLPS (475 aa)) the chain is on the cytoplasmic side. The segment at 253–272 (KRLLFYKYMHKKYRTDKHRG) is putative calmodulin-binding region. Calx-beta domains lie at 386 to 485 (VHTD…VRLS) and 519 to 619 (ATVT…IALG). Ca(2+) is bound by residues E409, D445, D470, D471, I473, E475, E478, D525, D526, D527, E543, D579, E606, E607, and E672. A helical transmembrane segment spans residues 727-747 (CFDYVMHFLTVFWKVLFACVP). At 748–754 (PTEYCHG) the chain is on the extracellular side. Residues 755-775 (WACFAVSILIIGMLTAIIGDL) traverse the membrane as a helical segment. The Cytoplasmic portion of the chain corresponds to 776–778 (ASH). The helical transmembrane segment at 779-799 (FGCTIGLKDSVTAVVFVAFGT) threads the bilayer. The Alpha-2 repeat unit spans residues 796-832 (AFGTSVPDTFASKAAALQDVYADASIGNVTGSNAVNV). The Extracellular segment spans residues 800–828 (SVPDTFASKAAALQDVYADASIGNVTGSN). N-linked (GlcNAc...) asparagine glycosylation occurs at N823. The chain crosses the membrane as a helical span at residues 829 to 849 (AVNVFLGIGLAWSVAAIYWAL). At 850–860 (QGQEFHVSAGT) the chain is on the cytoplasmic side. Residues 861–881 (LAFSVTLFTIFAFVCISVLLY) form a helical membrane-spanning segment. Residues 882 to 903 (RRRPHLGGELGGPRGCKLATTW) lie on the Extracellular side of the membrane. The helical transmembrane segment at 904-924 (LFVSLWLLYILFATLEAYCYI) threads the bilayer. Topologically, residues 925–927 (KGF) are cytoplasmic.

This sequence belongs to the Ca(2+):cation antiporter (CaCA) (TC 2.A.19) family. SLC8 subfamily. Interacts with AKAP1. In terms of tissue distribution, isoform 2 is expressed in brain and skeletal muscle. Isoform 3 is expressed in excitable cells of brain, retina and skeletal muscle. Isoform 4 is expressed in skeletal muscle.

Its subcellular location is the cell membrane. It is found in the perikaryon. The protein localises to the cell projection. The protein resides in the dendrite. It localises to the dendritic spine. Its subcellular location is the sarcolemma. It is found in the cytoplasm. The protein localises to the sarcoplasm. The protein resides in the cell junction. It localises to the mitochondrion outer membrane. Its subcellular location is the perinuclear region. It is found in the endoplasmic reticulum membrane. It catalyses the reaction Ca(2+)(in) + 3 Na(+)(out) = Ca(2+)(out) + 3 Na(+)(in). Its activity is regulated as follows. Calcium transport is down-regulated by Na(+) and stimulated by Ca(2+). In terms of biological role, mediates the electrogenic exchange of Ca(2+) against Na(+) ions across the cell membrane, and thereby contributes to the regulation of cytoplasmic Ca(2+) levels and Ca(2+)-dependent cellular processes. Contributes to cellular Ca(2+) homeostasis in excitable cells, both in muscle and in brain. In a first phase, voltage-gated channels mediate the rapid increase of cytoplasmic Ca(2+) levels due to release of Ca(2+) stores from the endoplasmic reticulum. SLC8A3 mediates the export of Ca(2+) from the cell during the next phase, so that cytoplasmic Ca(2+) levels rapidly return to baseline. Contributes to Ca(2+) transport during excitation-contraction coupling in muscle. In neurons, contributes to the rapid decrease of cytoplasmic Ca(2+) levels back to baseline after neuronal activation, and thereby contributes to modulate synaptic plasticity, learning and memory. Required for normal oligodendrocyte differentiation and for normal myelination. Mediates Ca(2+) efflux from mitochondria and contributes to mitochondrial Ca(2+) ion homeostasis. This Homo sapiens (Human) protein is Sodium/calcium exchanger 3 (SLC8A3).